A 464-amino-acid polypeptide reads, in one-letter code: tRNA modification GTPase MnmE (464 aa).

(6S)-5-formyl-5,6,7,8-tetrahydrofolate contacts are provided by R27, E90, and K129. The TrmE-type G domain maps to 222–384 (GVTLVLAGSV…LYDKIKTLIS (163 aa)). Residues 232-237 (NAGKSS), 251-257 (SSYPGTT), and 276-279 (DTAG) each bind GTP. Mg(2+) is bound by residues S236 and T257. K464 provides a ligand contact to (6S)-5-formyl-5,6,7,8-tetrahydrofolate.

It belongs to the TRAFAC class TrmE-Era-EngA-EngB-Septin-like GTPase superfamily. TrmE GTPase family. As to quaternary structure, homodimer. Heterotetramer of two MnmE and two MnmG subunits. The cofactor is K(+).

The protein resides in the cytoplasm. Functionally, exhibits a very high intrinsic GTPase hydrolysis rate. Involved in the addition of a carboxymethylaminomethyl (cmnm) group at the wobble position (U34) of certain tRNAs, forming tRNA-cmnm(5)s(2)U34. This Borrelia garinii subsp. bavariensis (strain ATCC BAA-2496 / DSM 23469 / PBi) (Borreliella bavariensis) protein is tRNA modification GTPase MnmE.